Reading from the N-terminus, the 376-residue chain is Protein XRP2 (376 aa).

Residues 1–55 (MGCFFSKKSRRKSPKKDAALPTGDESATGNDLAETNNTALGSNSNQEAPKQYSWD) form a disordered region. A lipid anchor (N-myristoyl glycine) is attached at Gly2. Cys3 carries the S-palmitoyl cysteine lipid modification. Residues 25 to 48 (ESATGNDLAETNNTALGSNSNQEA) show a composition bias toward polar residues. The region spanning 49-204 (PKQYSWDKRE…NWSNIHDFTP (156 aa)) is the C-CAP/cofactor C-like domain. GTP is bound by residues 123-124 (GS) and 140-143 (QQFR).

Belongs to the TBCC family. Myristoylated on Gly-2; which may be required for membrane targeting. Post-translationally, palmitoylated on Cys-3; which may be required for plasma membrane targeting. In terms of tissue distribution, in the retina, detected in both rod and cone photoreceptors (at protein level). Has strongest expression in the retinal outer nuclear layer (ONL) and weaker expression in the outer plexiform layer (OPL) and inner plexiform layer (IPL) (at protein level). Expressed in all tissues tested.

It localises to the cell membrane. The protein localises to the cell projection. It is found in the cilium. Functionally, acts as a GTPase-activating protein (GAP) involved in trafficking between the Golgi and the ciliary membrane. Acts as a GTPase-activating protein (GAP) for tubulin in concert with tubulin-specific chaperone C, but does not enhance tubulin heterodimerization. In the retina, required for maintenance of rod and cone photoreceptor cells. May have a role in normal retinal localization of the transducins GNB1 and GNAT1, and the rhodopsin kinase GRK1. In Danio rerio (Zebrafish), this protein is Protein XRP2.